Consider the following 324-residue polypeptide: tRNA N6-adenosine threonylcarbamoyltransferase (324 aa).

His-107, His-111, and Tyr-127 together coordinate Fe cation. Substrate-binding positions include 127–131, Asp-159, Gly-172, Glu-176, and Asn-257; that span reads YVSGG. Fe cation is bound at residue Asp-285.

The protein belongs to the KAE1 / TsaD family. Monomer. Component of the KEOPS complex that consists of Kae1, Bud32, Cgi121 and Pcc1; the whole complex dimerizes. Fe(2+) serves as cofactor.

It is found in the cytoplasm. It carries out the reaction L-threonylcarbamoyladenylate + adenosine(37) in tRNA = N(6)-L-threonylcarbamoyladenosine(37) in tRNA + AMP + H(+). Functionally, required for the formation of a threonylcarbamoyl group on adenosine at position 37 (t(6)A37) in tRNAs that read codons beginning with adenine. Is a component of the KEOPS complex that is probably involved in the transfer of the threonylcarbamoyl moiety of threonylcarbamoyl-AMP (TC-AMP) to the N6 group of A37. Kae1 likely plays a direct catalytic role in this reaction, but requires other protein(s) of the complex to fulfill this activity. In vitro, binds tRNA, ssRNA, both single- and double-stranded DNA, and exhibits a low ATPase activity. The sequence is that of tRNA N6-adenosine threonylcarbamoyltransferase from Pyrococcus abyssi (strain GE5 / Orsay).